We begin with the raw amino-acid sequence, 301 residues long: Mitochondrial import receptor subunit TOM40 homolog (301 aa).

The segment at 1 to 20 (MATPTESEFAAPIPQTNPGS) is disordered.

It belongs to the Tom40 family. As to quaternary structure, forms part of the preprotein translocase complex of the outer mitochondrial membrane (TOM complex). Interacts with mitochondrial targeting sequences.

The protein resides in the mitochondrion outer membrane. Channel-forming protein essential for import of protein precursors into mitochondria. Specifically required for nnt-1 accumulation in the mitochondria and may be involved in the secretion of daf-28/insulin from the mitochondria. Required for embryonic and larval development. This Caenorhabditis briggsae protein is Mitochondrial import receptor subunit TOM40 homolog.